We begin with the raw amino-acid sequence, 179 residues long: MIIYLHGFDSSSPGNHEKVMQLKFIDEDVRFVNYSTLHPRHDMQFLLNEVHKLVSESKDPAPLICGVGLGGYWSERIGFLCGIKQAIFNPNLFPYENMTGKIDRPEEYKDIETKCVENFREKNKGKCLVFLSKEDGILDSQRSAALLSPFYEIVWDDVETHKFKKISHHLQRIKAFKQR.

It belongs to the UPF0227 family.

The sequence is that of UPF0227 protein PM0825 from Pasteurella multocida (strain Pm70).